The primary structure comprises 251 residues: 3-deoxy-manno-octulosonate cytidylyltransferase (251 aa).

This sequence belongs to the KdsB family.

It is found in the cytoplasm. It carries out the reaction 3-deoxy-alpha-D-manno-oct-2-ulosonate + CTP = CMP-3-deoxy-beta-D-manno-octulosonate + diphosphate. It functions in the pathway nucleotide-sugar biosynthesis; CMP-3-deoxy-D-manno-octulosonate biosynthesis; CMP-3-deoxy-D-manno-octulosonate from 3-deoxy-D-manno-octulosonate and CTP: step 1/1. Its pathway is bacterial outer membrane biogenesis; lipopolysaccharide biosynthesis. Activates KDO (a required 8-carbon sugar) for incorporation into bacterial lipopolysaccharide in Gram-negative bacteria. The polypeptide is 3-deoxy-manno-octulosonate cytidylyltransferase (Chlorobium luteolum (strain DSM 273 / BCRC 81028 / 2530) (Pelodictyon luteolum)).